Reading from the N-terminus, the 78-residue chain is Large ribosomal subunit protein bL28 (78 aa).

It belongs to the bacterial ribosomal protein bL28 family.

The sequence is that of Large ribosomal subunit protein bL28 from Gloeothece citriformis (strain PCC 7424) (Cyanothece sp. (strain PCC 7424)).